We begin with the raw amino-acid sequence, 171 residues long: 2-vinyl bacteriochlorophyllide hydratase (171 aa).

It functions in the pathway porphyrin-containing compound metabolism; bacteriochlorophyll biosynthesis (light-independent). The protein is 2-vinyl bacteriochlorophyllide hydratase (bchF) of Rhodobacter capsulatus (strain ATCC BAA-309 / NBRC 16581 / SB1003).